A 288-amino-acid polypeptide reads, in one-letter code: Beta-lactamase CARB-3 (288 aa).

The signal sequence occupies residues Met-1–Ala-17. Ser-65 (acyl-ester intermediate) is an active-site residue. The cysteines at positions 72 and 118 are disulfide-linked. Arg-229 to Gly-231 provides a ligand contact to substrate.

It belongs to the class-A beta-lactamase family.

It catalyses the reaction a beta-lactam + H2O = a substituted beta-amino acid. Hydrolyzes both carbenicillin and oxacillin. The polypeptide is Beta-lactamase CARB-3 (carB3) (Pseudomonas aeruginosa).